We begin with the raw amino-acid sequence, 559 residues long: T-complex protein 1 subunit gamma (559 aa).

Cys369 and Cys375 are disulfide-bonded. The disordered stretch occupies residues 537–559; it reads GGASVTDGNGQEIPETFGDARDG.

This sequence belongs to the TCP-1 chaperonin family. In terms of assembly, heterooligomeric complex of about 850 to 900 kDa that forms two stacked rings, 12 to 16 nm in diameter.

It localises to the cytoplasm. Functionally, molecular chaperone; assists the folding of proteins upon ATP hydrolysis. Known to play a role, in vitro, in the folding of actin and tubulin. The protein is T-complex protein 1 subunit gamma of Tetrahymena pyriformis.